The chain runs to 212 residues: Ropporin-1 (212 aa).

An RIIa domain is found at Pro-12 to Ala-43. The residue at position 56 (Ser-56) is a Phosphoserine. The interval Val-209–Glu-212 is interaction with RHPN1.

The protein belongs to the ropporin family. In terms of assembly, homodimer. Interacts with AKAP3. May interact with SPA17. Interacts with RHPN1. Interacts with FSCB; the interaction increases upon spermatozoa capacitation conditions. Interacts with CFAP61. Post-translationally, sumoylated, sumoylation decreases upon spermatozoa capacitation conditions. Testis-specific. Present in the most inner parts of seminiferous tubules (at protein level).

The protein resides in the cell projection. The protein localises to the cilium. It localises to the flagellum. In terms of biological role, important for male fertility. With ROPN1L, involved in fibrous sheath integrity and sperm motility, plays a role in PKA-dependent signaling processes required for spermatozoa capacitation. This is Ropporin-1 (Ropn1) from Mus musculus (Mouse).